The following is a 384-amino-acid chain: D-galactosamine-6-phosphate deaminase AgaS (384 aa).

SIS domains are found at residues 45–197 (LEPL…SQTF) and 215–364 (SEGV…PDTP).

This sequence belongs to the SIS family. AgaS subfamily.

The catalysed reaction is D-galactosamine 6-phosphate + H2O = D-tagatopyranose 1-phosphate + NH4(+). In terms of biological role, catalyzes the isomerization-deamination of galactosamine 6-phosphate to form tagatofuranose 6-phosphate and ammonium ion. This chain is D-galactosamine-6-phosphate deaminase AgaS, found in Escherichia coli.